The chain runs to 70 residues: Probable protein transport protein Sec61 subunit gamma (70 aa).

Residues 1–33 (MADNADDLFQIPKNFYKEGSHFIKRCVKPDRKE) are Cytoplasmic-facing. The chain crosses the membrane as a helical span at residues 34 to 62 (FLSISKAVATGFVLMGLIGYIIKLIHIPI). The Extracellular segment spans residues 63–70 (NKVLVGGA).

The protein belongs to the SecE/SEC61-gamma family. As to quaternary structure, heterotrimeric complex composed of SEC61-alpha, SEC61-beta and SEC61-gamma.

Its subcellular location is the endoplasmic reticulum membrane. Its function is as follows. Necessary for protein translocation in the endoplasmic reticulum. This chain is Probable protein transport protein Sec61 subunit gamma (sss1), found in Schizosaccharomyces pombe (strain 972 / ATCC 24843) (Fission yeast).